The primary structure comprises 90 residues: YcgL domain-containing protein YpsIP31758_2009 (90 aa).

A YcgL domain is found at 1-85; the sequence is MLCAIYRSPK…PPESLLKMHL (85 aa).

The polypeptide is YcgL domain-containing protein YpsIP31758_2009 (Yersinia pseudotuberculosis serotype O:1b (strain IP 31758)).